Consider the following 51-residue polypeptide: Insulin (51 aa).

Intrachain disulfides connect Cys-7/Cys-37, Cys-19/Cys-50, and Cys-36/Cys-41.

This sequence belongs to the insulin family. In terms of assembly, heterodimer of a B chain and an A chain linked by two disulfide bonds.

The protein localises to the secreted. Insulin decreases blood glucose concentration. It increases cell permeability to monosaccharides, amino acids and fatty acids. It accelerates glycolysis, the pentose phosphate cycle, and glycogen synthesis in liver. The chain is Insulin (INS) from Capra hircus (Goat).